A 114-amino-acid polypeptide reads, in one-letter code: NADH-ubiquinone oxidoreductase chain 3 (114 aa).

The next 3 membrane-spanning stretches (helical) occupy residues 3–23 (LITL…INTY), 52–72 (IQFF…VLLL), and 86–106 (TILL…YEWL).

Belongs to the complex I subunit 3 family.

It is found in the mitochondrion membrane. It catalyses the reaction a ubiquinone + NADH + 5 H(+)(in) = a ubiquinol + NAD(+) + 4 H(+)(out). Core subunit of the mitochondrial membrane respiratory chain NADH dehydrogenase (Complex I) that is believed to belong to the minimal assembly required for catalysis. Complex I functions in the transfer of electrons from NADH to the respiratory chain. The immediate electron acceptor for the enzyme is believed to be ubiquinone. The sequence is that of NADH-ubiquinone oxidoreductase chain 3 (MT-ND3) from Lycodon semicarinatus (Ryukyu odd-tooth snake).